The following is an 89-amino-acid chain: Large ribosomal subunit protein uL23cz/uL23cy (89 aa).

This sequence belongs to the universal ribosomal protein uL23 family. In terms of assembly, part of the 50S ribosomal subunit.

The protein localises to the plastid. The protein resides in the chloroplast. Functionally, binds to 23S rRNA. The polypeptide is Large ribosomal subunit protein uL23cz/uL23cy (rpl23-A) (Calycanthus floridus var. glaucus (Eastern sweetshrub)).